The chain runs to 348 residues: MNPYRRATLLCSVGLGTTLTFASSHWLLAWMGLEINTLAITPLMAQHHHPRAVEATTKYFLTQATAAAMILFASTTNAWMTGEWSINDLSNPIASTMFMAALALKIGLAPMHFWMPEVLQGLDLLTGLILSTWQKLAPLALIIQTAQTIDPLLLTLLGISSTLVGGWGGLNQTQLRKILAYSSIAHMGWMIIVIQYAPQLTLIALGTYIIMTSAAFLTLKMSLTTKISTLATTWSKSPILTSTTALVLLSLGGLPPLTGFMPKWLILQELTKQDLPIIATAMALTALISLYFYLRLLYAMTLTISPNMINSTTPWRTQTTQTSLPLALFTTAALGLLPMAPAILMLTT.

Transmembrane regions (helical) follow at residues 13 to 33 (VGLGTTLTFASSHWLLAWMGL), 60 to 80 (FLTQATAAAMILFASTTNAWM), 93 to 113 (IASTMFMAALALKIGLAPMHF), 149 to 169 (IDPLLLTLLGISSTLVGGWGG), 178 to 197 (ILAYSSIAHMGWMIIVIQYA), 202 to 219 (LIALGTYIIMTSAAFLTL), 246 to 266 (LVLLSLGGLPPLTGFMPKWLI), 274 to 294 (DLPIIATAMALTALISLYFYL), and 326 to 346 (LALFTTAALGLLPMAPAILML).

It belongs to the complex I subunit 2 family.

The protein localises to the mitochondrion inner membrane. The catalysed reaction is a ubiquinone + NADH + 5 H(+)(in) = a ubiquinol + NAD(+) + 4 H(+)(out). Functionally, core subunit of the mitochondrial membrane respiratory chain NADH dehydrogenase (Complex I) that is believed to belong to the minimal assembly required for catalysis. Complex I functions in the transfer of electrons from NADH to the respiratory chain. The immediate electron acceptor for the enzyme is believed to be ubiquinone. This is NADH-ubiquinone oxidoreductase chain 2 (MT-ND2) from Cyprinus carpio (Common carp).